The primary structure comprises 355 residues: Putative early 40.3 kDa protein (355 aa).

In terms of biological role, this protein is required for viral late gene expression. The chain is Putative early 40.3 kDa protein (DA41) from Orgyia pseudotsugata multicapsid polyhedrosis virus (OpMNPV).